The sequence spans 428 residues: Glutamate-1-semialdehyde 2,1-aminomutase (428 aa).

Lys266 carries the N6-(pyridoxal phosphate)lysine modification.

Belongs to the class-III pyridoxal-phosphate-dependent aminotransferase family. HemL subfamily. Homodimer. Requires pyridoxal 5'-phosphate as cofactor.

The protein resides in the cytoplasm. The catalysed reaction is (S)-4-amino-5-oxopentanoate = 5-aminolevulinate. It participates in porphyrin-containing compound metabolism; protoporphyrin-IX biosynthesis; 5-aminolevulinate from L-glutamyl-tRNA(Glu): step 2/2. The protein is Glutamate-1-semialdehyde 2,1-aminomutase of Herminiimonas arsenicoxydans.